Consider the following 228-residue polypeptide: Probable septum site-determining protein MinC (228 aa).

Belongs to the MinC family. As to quaternary structure, interacts with MinD and FtsZ.

Its function is as follows. Cell division inhibitor that blocks the formation of polar Z ring septums. Rapidly oscillates between the poles of the cell to destabilize FtsZ filaments that have formed before they mature into polar Z rings. Prevents FtsZ polymerization. In Bacillus cereus (strain B4264), this protein is Probable septum site-determining protein MinC.